The sequence spans 66 residues: Large ribosomal subunit protein bL35 (66 aa).

2 stretches are compositionally biased toward basic residues: residues 1-16 (MPKM…RVKR) and 38-49 (TKQKRQLRKARL). The disordered stretch occupies residues 1–49 (MPKMKTHRGAAKRVKRTASGQLKRSRAFTSHLFANKSTKQKRQLRKARL).

This sequence belongs to the bacterial ribosomal protein bL35 family.

The protein is Large ribosomal subunit protein bL35 of Staphylococcus aureus (strain MSSA476).